The sequence spans 215 residues: Probable nicotinate-nucleotide adenylyltransferase (215 aa).

Belongs to the NadD family.

It catalyses the reaction nicotinate beta-D-ribonucleotide + ATP + H(+) = deamido-NAD(+) + diphosphate. It participates in cofactor biosynthesis; NAD(+) biosynthesis; deamido-NAD(+) from nicotinate D-ribonucleotide: step 1/1. Functionally, catalyzes the reversible adenylation of nicotinate mononucleotide (NaMN) to nicotinic acid adenine dinucleotide (NaAD). This chain is Probable nicotinate-nucleotide adenylyltransferase, found in Gluconacetobacter diazotrophicus (strain ATCC 49037 / DSM 5601 / CCUG 37298 / CIP 103539 / LMG 7603 / PAl5).